The sequence spans 196 residues: ATP synthase subunit b 2 (196 aa).

Over residues 1–18 (MVVAQAGAPAHPPAAHGA) the composition is skewed to low complexity. Positions 1-33 (MVVAQAGAPAHPPAAHGAEAGHGEAAGGEHGGF) are disordered. Residues 41–60 (FASQLIWLIVSFGALYFLMS) traverse the membrane as a helical segment.

It belongs to the ATPase B chain family. In terms of assembly, F-type ATPases have 2 components, F(1) - the catalytic core - and F(0) - the membrane proton channel. F(1) has five subunits: alpha(3), beta(3), gamma(1), delta(1), epsilon(1). F(0) has three main subunits: a(1), b(2) and c(10-14). The alpha and beta chains form an alternating ring which encloses part of the gamma chain. F(1) is attached to F(0) by a central stalk formed by the gamma and epsilon chains, while a peripheral stalk is formed by the delta and b chains.

The protein localises to the cell inner membrane. Its function is as follows. F(1)F(0) ATP synthase produces ATP from ADP in the presence of a proton or sodium gradient. F-type ATPases consist of two structural domains, F(1) containing the extramembraneous catalytic core and F(0) containing the membrane proton channel, linked together by a central stalk and a peripheral stalk. During catalysis, ATP synthesis in the catalytic domain of F(1) is coupled via a rotary mechanism of the central stalk subunits to proton translocation. In terms of biological role, component of the F(0) channel, it forms part of the peripheral stalk, linking F(1) to F(0). The b'-subunit is a diverged and duplicated form of b found in plants and photosynthetic bacteria. This is ATP synthase subunit b 2 (atpF2) from Azorhizobium caulinodans (strain ATCC 43989 / DSM 5975 / JCM 20966 / LMG 6465 / NBRC 14845 / NCIMB 13405 / ORS 571).